Reading from the N-terminus, the 417-residue chain is Acetyltransferase nanB (417 aa).

Residues 1-24 form the signal peptide; it reads MRPSTTTLSLLVFLISSILLATTG. 5 helical membrane-spanning segments follow: residues 150–170, 284–304, 307–327, 356–376, and 389–409; these read LAVSAWQYLLADIGFSLLKNI, YLNNALVFAQSGIVHVYFNWI, VQDGDVGCMAFYISFVAGYFL, VGALWVATFLTIVTPWWVYPF, and FVDVFGFQGALTVVFMGAAAL.

Belongs to the wax synthase family.

It localises to the membrane. It functions in the pathway secondary metabolite biosynthesis. In terms of biological role, acetyltransferase; part of the gene cluster that mediates the biosynthesis of the benzazepine alkaloid nanangelenin A which contains an unprecedented 3,4-dihydro-1-benzazepine-2,5-dione-N-prenyl-N-acetoxy-anthranilamide scaffold. The first step of nanangelenin biosynthesis is catalyzed by the indoleamine 2,3-dioxygenase nanC which produces N-formyl-kynurenine through the catabolism of tryptophan. The two-module NRPS nanA then utilizes anthranilate (Ant) and L-kynurenine (L-Kyn) to assemble the dipeptide product nanangelenin B. The first adenylation domain of nanA (A1) loads anthranilate onto the T1 domain, while A2 loads kynurenine, generated through spontaneous nonenzymatic deformylation of the nanC-supplied N-formyl-kynurenine. The peptide bond formation between the tethered amino acids is catalyzed by the first condensation domain (C1) between anthranilate's carbonyl carbon and kynurenine's aliphatic primary amine. The second C domain (C2) catalyzes the final cyclization event between the aromatic amine of kynurenine and the tethered carbonyl carbon, yielding nanangelenin B. The terminal T3 domain enhances the catalytic efficiency of C2, suggesting the T2-tethered Ant-L-Kyn is transferred to T3 prior to cyclization by C2. Once released from nanA, nanangelenin B is then prenylated by the prenyltransferase nanD to form nanangelenin C. Nanangelenin C is then N-hydroxylated by the FAD-dependent monooxygenase nanF and further acetylated by the acetyltransferase nanB to yield nanangelenin F. Finally, the N-methyltransferase nanE methylates the amide nitrogen of 1-benzazepine to convert nanangelenin F into nanangelenin A. NanE is also able to methylate most of the intermediates of the pathway such as nanangelenin B and nanangelenin C to produce nanangelenin D and nanangelenin E, respectively. In Aspergillus nanangensis, this protein is Acetyltransferase nanB.